The following is a 266-amino-acid chain: Diphthine synthase (266 aa).

S-adenosyl-L-methionine contacts are provided by residues Leu9, Asp84, Val87, 112–113 (SI), Leu169, Ala210, and His235.

Belongs to the diphthine synthase family. Homodimer.

It carries out the reaction 2-[(3S)-amino-3-carboxypropyl]-L-histidyl-[translation elongation factor 2] + 3 S-adenosyl-L-methionine = diphthine-[translation elongation factor 2] + 3 S-adenosyl-L-homocysteine + 3 H(+). Its pathway is protein modification; peptidyl-diphthamide biosynthesis. In terms of biological role, S-adenosyl-L-methionine-dependent methyltransferase that catalyzes the trimethylation of the amino group of the modified target histidine residue in translation elongation factor 2 (EF-2), to form an intermediate called diphthine. The three successive methylation reactions represent the second step of diphthamide biosynthesis. The sequence is that of Diphthine synthase from Methanosarcina mazei (strain ATCC BAA-159 / DSM 3647 / Goe1 / Go1 / JCM 11833 / OCM 88) (Methanosarcina frisia).